A 336-amino-acid chain; its full sequence is Phospho-N-acetylmuramoyl-pentapeptide-transferase (336 aa).

The next 10 membrane-spanning stretches (helical) occupy residues 1–21 (MLPL…SLFL), 56–76 (IPTA…LLLF), 78–98 (IQLW…ALGW), 124–144 (CLAA…FLSF), 148–168 (FLGI…FAIA), 184–204 (GLDG…LVVA), 210–230 (PWAF…LGFL), 239–259 (VFMG…CAVL), 264–284 (FLLL…IVQV), and 314–334 (VVRN…IAVF).

This sequence belongs to the glycosyltransferase 4 family. MraY subfamily. Mg(2+) serves as cofactor.

Its subcellular location is the cell inner membrane. It catalyses the reaction UDP-N-acetyl-alpha-D-muramoyl-L-alanyl-gamma-D-glutamyl-meso-2,6-diaminopimeloyl-D-alanyl-D-alanine + di-trans,octa-cis-undecaprenyl phosphate = di-trans,octa-cis-undecaprenyl diphospho-N-acetyl-alpha-D-muramoyl-L-alanyl-D-glutamyl-meso-2,6-diaminopimeloyl-D-alanyl-D-alanine + UMP. The protein operates within cell wall biogenesis; peptidoglycan biosynthesis. Catalyzes the initial step of the lipid cycle reactions in the biosynthesis of the cell wall peptidoglycan: transfers peptidoglycan precursor phospho-MurNAc-pentapeptide from UDP-MurNAc-pentapeptide onto the lipid carrier undecaprenyl phosphate, yielding undecaprenyl-pyrophosphoryl-MurNAc-pentapeptide, known as lipid I. The polypeptide is Phospho-N-acetylmuramoyl-pentapeptide-transferase (Chlamydia trachomatis serovar L2b (strain UCH-1/proctitis)).